The chain runs to 477 residues: MRFSRFIIGLTSCIAFSVQAANVDEYITQLPAGANLALMVQKVGASAPAIDYHSQQMALPASTQKVITALAALIQLGPDFRFTTTLETKGNVENGVLKGDLVARFGADPTLKRQDIRNMVATLKKSGVNQIDGNVLIDTSIFASHDKAPGWPWNDMTQCFSAPPAAAIVDRNCFSVSLYSAPKPGDMAFIRVASYYPVTMFSQVRTLPRGSAEAQYCELDVVPGDLNRFTLTGCLPQRSEPLPLAFAVQDGASYAGAILKDELKQAGITWSGTLLRQTQVNEPGTVVASKQSAPLHDLLKIMLKKSDNMIADTVFRMIGHARFNVPGTWRAGSDAVRQILRQQAGVDIGNTIIADGSGLSRHNLIAPATMMQVLQYIAQHDNELNFISMLPLAGYDGSLQYRAGLHQAGVDGKVSAKTGSLQGVYNLAGFITTASGQRMAFVQYLSGYAVEPADQRNRRIPLVRFESRLYKDIYQNN.

The N-terminal stretch at 1-20 (MRFSRFIIGLTSCIAFSVQA) is a signal peptide. The active-site Acyl-ester intermediate is the Ser-62. The active-site Proton acceptor is Lys-65. The interval 90–263 (GNVENGVLKG…YAGAILKDEL (174 aa)) is absent in class-A beta-lactamases. Ser-306 is a catalytic residue. Lys-417 is a substrate binding site.

This sequence belongs to the peptidase S13 family.

The protein localises to the periplasm. The catalysed reaction is Preferential cleavage: (Ac)2-L-Lys-D-Ala-|-D-Ala. Also transpeptidation of peptidyl-alanyl moieties that are N-acyl substituents of D-alanine.. It functions in the pathway cell wall biogenesis; peptidoglycan biosynthesis. Not involved in transpeptidation but exclusively catalyzes a DD-carboxypeptidase and DD-endopeptidase reaction. This Escherichia coli (strain K12) protein is D-alanyl-D-alanine carboxypeptidase DacB (dacB).